The following is a 411-amino-acid chain: MVVKINENYLKLKSSYLFVEVARREAEFQKNNPDADIIKMGIGDVTKPLAPSVIKAFQGAVDEMGNADTFRGYGPEQGYDFLAEEIIKNDFEPFGVSLDTDEVFISDGAKCDTGNIQEIFDLGNKIAVTDPVYTVYVDTNVMAGRTGEMKDDGMYEGLTYLKCNAENGFVPELPEEDVDIIYLCYPNNPTGTTLTYDQLKVFVDYAIEHKAIILFDAAYECFIREDDVPHTIYEIEGAKNVAIEFRSFSKMAGFTGTRCAYTVVPKEVAGYDSKGNEVQLNQLWNRRQTTKFNGVSYPVQVAAAAVYSDDGKKEIKEIIDYYMENAKVIKSSLEKLGLEVYGGVNSPYIWVKTPNNMDSWAFFDLLLNEANVVGTPGSGFGPSGEGYLRLTAFNTLENTKEAMDRISKLNF.

Tyr16 and Gly43 together coordinate substrate. Residues Tyr73, 109 to 110 (AK), Tyr133, Asn188, Tyr219, and 247 to 249 (SFS) each bind pyridoxal 5'-phosphate. Substrate is bound by residues Lys110, Tyr133, and Asn188. Residue Lys250 is modified to N6-(pyridoxal phosphate)lysine. Pyridoxal 5'-phosphate is bound by residues Arg258 and Asn293. The substrate site is built by Asn293 and Arg389.

It belongs to the class-I pyridoxal-phosphate-dependent aminotransferase family. LL-diaminopimelate aminotransferase subfamily. In terms of assembly, homodimer. The cofactor is pyridoxal 5'-phosphate.

It carries out the reaction (2S,6S)-2,6-diaminopimelate + 2-oxoglutarate = (S)-2,3,4,5-tetrahydrodipicolinate + L-glutamate + H2O + H(+). It participates in amino-acid biosynthesis; L-lysine biosynthesis via DAP pathway; LL-2,6-diaminopimelate from (S)-tetrahydrodipicolinate (aminotransferase route): step 1/1. Involved in the synthesis of meso-diaminopimelate (m-DAP or DL-DAP), required for both lysine and peptidoglycan biosynthesis. Catalyzes the direct conversion of tetrahydrodipicolinate to LL-diaminopimelate. The polypeptide is LL-diaminopimelate aminotransferase (Methanobrevibacter smithii (strain ATCC 35061 / DSM 861 / OCM 144 / PS)).